The chain runs to 327 residues: UPF0065 protein in gbd 5'region (327 aa).

Positions 1-30 form a signal peptide, tat-type signal; that stretch reads MQRRHFIARAGIAAATAALGLAAMPAQAQA.

Belongs to the UPF0065 (bug) family. Predicted to be exported by the Tat system. The position of the signal peptide cleavage has not been experimentally proven.

The protein resides in the periplasm. The polypeptide is UPF0065 protein in gbd 5'region (Cupriavidus necator (Alcaligenes eutrophus)).